We begin with the raw amino-acid sequence, 131 residues long: Rhodopsin (131 aa).

Residues 1-16 (CGIDYYTRAPGYNNES) are Extracellular-facing. N-linked (GlcNAc...) asparagine glycosylation occurs at Asn-14. A helical transmembrane segment spans residues 17-38 (FVIYMFIVHFLIPLFIISFCYG). Over 39–66 (NLLCAVKAAAAAQEESETTQRAEREVTR) the chain is Cytoplasmic. Residues 67 to 88 (MVIMMVISYLVSWVPYASVAWY) form a helical membrane-spanning segment. Residues 89-100 (IFSNQGSEFGPV) lie on the Extracellular side of the membrane. A helical transmembrane segment spans residues 101–122 (FMTIPAFFAKSSALYNPLIYVL). Lys-110 is modified (N6-(retinylidene)lysine). Residues 123–131 (MNKQFRHCM) are Cytoplasmic-facing.

Belongs to the G-protein coupled receptor 1 family. Opsin subfamily. Phosphorylated on some or all of the serine and threonine residues present in the C-terminal region. In terms of processing, contains one covalently linked retinal chromophore.

The protein resides in the membrane. The protein localises to the cell projection. Its subcellular location is the cilium. It is found in the photoreceptor outer segment. Functionally, photoreceptor required for image-forming vision at low light intensity. While most salt water fish species use retinal as chromophore, most freshwater fish use 3-dehydroretinal, or a mixture of retinal and 3-dehydroretinal. Light-induced isomerization of 11-cis to all-trans retinal triggers a conformational change that activates signaling via G-proteins. Subsequent receptor phosphorylation mediates displacement of the bound G-protein alpha subunit by arrestin and terminates signaling. The sequence is that of Rhodopsin (rho) from Coregonus autumnalis (Arctic cisco).